Here is a 213-residue protein sequence, read N- to C-terminus: Ras-related protein Rab-25 (213 aa).

Residues Ser-21, Gly-24, Lys-25, Thr-26, Asn-27, Ser-38, His-39, Thr-43, and Thr-44 each coordinate GTP. A Mg(2+)-binding site is contributed by Thr-26. Short sequence motifs (switch) lie at residues 35-49 (NEFS…GVEF) and 67-84 (DTAG…YYRG). Positions 44 and 67 each coordinate Mg(2+). The GTP site is built by Gly-70, Asn-125, Lys-126, Asp-128, Ala-156, and Leu-157. S-geranylgeranyl cysteine attachment occurs at residues Cys-209 and Cys-210. Cys-210 carries the cysteine methyl ester modification. The propeptide at 211–213 (ISL) is removed in mature form.

It belongs to the small GTPase superfamily. Rab family. In terms of assembly, interacts (GTP-bound form) with RAB11FIP1, RAB11FIP2, RAB11FIP3 and RAB11FIP4. Interacts (via the hypervariable C-terminal region) with ITGB1 (via the cytoplasmic region); the interaction is GTP-dependent. Interacts with ITGAV. Associates with the integrin alpha-V/beta-1 heterodimer. Interacts with VPS33B. Mg(2+) is required as a cofactor.

It is found in the cell membrane. It localises to the cell projection. The protein localises to the pseudopodium membrane. Its subcellular location is the cytoplasmic vesicle. The catalysed reaction is GTP + H2O = GDP + phosphate + H(+). Its activity is regulated as follows. Regulated by guanine nucleotide exchange factors (GEFs) which promote the exchange of bound GDP for free GTP. Regulated by GTPase activating proteins (GAPs) which increase the GTP hydrolysis activity. Inhibited by GDP dissociation inhibitors (GDIs) which prevent Rab-GDP dissociation. In terms of biological role, the small GTPases Rab are key regulators of intracellular membrane trafficking, from the formation of transport vesicles to their fusion with membranes. Rabs cycle between an inactive GDP-bound form and an active GTP-bound form that is able to recruit to membranes different set of downstream effectors directly responsible for vesicle formation, movement, tethering and fusion. RAB25 regulates epithelial cell differentiation, proliferation and survival, thereby playing key roles in tumorigenesis. Promotes invasive migration of cells in which it functions to localize and maintain integrin alpha-V/beta-1 at the tips of extending pseudopodia. Involved in the regulation of epithelial morphogenesis through the control of CLDN4 expression and localization at tight junctions. May selectively regulate the apical recycling pathway. Together with MYO5B regulates transcytosis. The sequence is that of Ras-related protein Rab-25 (RAB25) from Bos taurus (Bovine).